A 427-amino-acid polypeptide reads, in one-letter code: Adenylosuccinate synthetase (427 aa).

GTP is bound by residues 12–18 and 40–42; these read GDEGKGK and GHT. Asp13 functions as the Proton acceptor in the catalytic mechanism. Asp13 and Gly40 together coordinate Mg(2+). Residues 13–16, 38–41, Thr126, Arg140, Gln221, Thr236, and Arg299 contribute to the IMP site; these read DEGK and NAGH. Residue His41 is the Proton donor of the active site. 295-301 contributes to the substrate binding site; it reads STTKRPR. GTP-binding positions include Arg301, 327-329, and 409-411; these read KLD and SVG.

The protein belongs to the adenylosuccinate synthetase family. As to quaternary structure, homodimer. Mg(2+) is required as a cofactor.

The protein resides in the cytoplasm. The enzyme catalyses IMP + L-aspartate + GTP = N(6)-(1,2-dicarboxyethyl)-AMP + GDP + phosphate + 2 H(+). The protein operates within purine metabolism; AMP biosynthesis via de novo pathway; AMP from IMP: step 1/2. Its function is as follows. Plays an important role in the de novo pathway of purine nucleotide biosynthesis. Catalyzes the first committed step in the biosynthesis of AMP from IMP. The sequence is that of Adenylosuccinate synthetase from Borrelia duttonii (strain Ly).